Consider the following 346-residue polypeptide: MKQIINPLKGNNNKVPIWFMRQAGRYLPEYKKVRETTKNFLDFCYDVSKATEVTLQPIKRYGFDAAIIFSDILVLPHALGWEVDFKENIGPILKQFKSQEDFKYLQINPNYKLEKVYEIIKKVKKELPSPISLIGFAGSPWTVMSYMLEGKGKQDFKTSKKFIYENRILAEELLNFITEKTADHLINQAKSGADILKLFDSWSGVLAEEEFTEFVIEPTKKIILKVKEVFPKTPIIAFPKGAGLLYEKFIKEVPIDVLAVDQMVPLKKMKEWSDKVIVQGNLDPVVLLTNKEIIKEKTYKILQVMKGKNFIFNLGHGILPETPTENVEFLIEYVRLYEEKNSNSTF.

Substrate is bound by residues 21 to 25 (RQAGR), D71, Y146, S201, and H316.

This sequence belongs to the uroporphyrinogen decarboxylase family. In terms of assembly, homodimer.

It is found in the cytoplasm. It catalyses the reaction uroporphyrinogen III + 4 H(+) = coproporphyrinogen III + 4 CO2. The protein operates within porphyrin-containing compound metabolism; protoporphyrin-IX biosynthesis; coproporphyrinogen-III from 5-aminolevulinate: step 4/4. Functionally, catalyzes the decarboxylation of four acetate groups of uroporphyrinogen-III to yield coproporphyrinogen-III. In Rickettsia africae (strain ESF-5), this protein is Uroporphyrinogen decarboxylase.